Here is a 303-residue protein sequence, read N- to C-terminus: UDP-3-O-acyl-N-acetylglucosamine deacetylase (303 aa).

The Zn(2+) site is built by His78, His237, and Asp241. The Proton donor role is filled by His264.

The protein belongs to the LpxC family. It depends on Zn(2+) as a cofactor.

It carries out the reaction a UDP-3-O-[(3R)-3-hydroxyacyl]-N-acetyl-alpha-D-glucosamine + H2O = a UDP-3-O-[(3R)-3-hydroxyacyl]-alpha-D-glucosamine + acetate. It participates in glycolipid biosynthesis; lipid IV(A) biosynthesis; lipid IV(A) from (3R)-3-hydroxytetradecanoyl-[acyl-carrier-protein] and UDP-N-acetyl-alpha-D-glucosamine: step 2/6. In terms of biological role, catalyzes the hydrolysis of UDP-3-O-myristoyl-N-acetylglucosamine to form UDP-3-O-myristoylglucosamine and acetate, the committed step in lipid A biosynthesis. The sequence is that of UDP-3-O-acyl-N-acetylglucosamine deacetylase from Chromohalobacter salexigens (strain ATCC BAA-138 / DSM 3043 / CIP 106854 / NCIMB 13768 / 1H11).